The primary structure comprises 306 residues: Ubiquitin carboxyl-terminal hydrolase RPN11 (306 aa).

At M1 the chain carries N-acetylmethionine. The segment at 1–20 (MERLQRLMMNSKVGSADTGR) is disordered. Residues 27 to 162 (VYISSIALLK…IDAFRLIDTG (136 aa)) enclose the MPN domain. Residues H109, H111, and D122 each contribute to the Zn(2+) site. Residues 109-122 (HSHPGFGCWLSSVD) carry the JAMM motif motif.

Belongs to the peptidase M67A family. Component of the lid subcomplex of the 19S proteasome regulatory particle complex (also named PA700 complex). The 26S proteasome consists of a 20S proteasome core and two 19S regulatory subunits. Interacts directly with RPN8 and STS1. N-acetylated by NAT3.

It carries out the reaction Thiol-dependent hydrolysis of ester, thioester, amide, peptide and isopeptide bonds formed by the C-terminal Gly of ubiquitin (a 76-residue protein attached to proteins as an intracellular targeting signal).. Functionally, component of the lid subcomplex of the 26S proteasome, a multiprotein complex involved in the ATP-dependent degradation of ubiquitinated proteins. RPN11 is the only catalytically active member of the lid and serves as the essential deubiquitinase of the proteasome. This is Ubiquitin carboxyl-terminal hydrolase RPN11 (RPN11) from Saccharomyces cerevisiae (strain ATCC 204508 / S288c) (Baker's yeast).